Reading from the N-terminus, the 1167-residue chain is Kinesin-like protein KIN-14M (1167 aa).

The tract at residues 93 to 130 is disordered; that stretch reads PRKENDPGTQNSEGRRKIPKNPAMSEPSSPLSQTTLSS. The segment covering 117-130 has biased composition (low complexity); sequence SEPSSPLSQTTLSS. Coiled-coil stretches lie at residues 271 to 333, 366 to 398, and 432 to 489; these read VHQM…KEEM, AKYR…AMKS, and KQEL…ESRS. A Kinesin motor domain is found at 572-900; it reads NIRVHCRIRP…LKFADRVSGV (329 aa). An ATP-binding site is contributed by 656–663; sequence GQTGSGKT. Residues 907-944 are a coiled coil; the sequence is ANKEGKDIKEFKEQLSLLKDKIAKKDEEISRLQLQSHN. 2 disordered regions span residues 955-974 and 1083-1167; these read SLLK…SKIQ and PDQD…KRWT. Over residues 958–972 the composition is skewed to low complexity; that stretch reads KHSSSSPGISSLGSK. Polar residues-rich tracts occupy residues 1113–1124 and 1151–1167; these read ASRTTTPKTPQS and TQAT…KRWT.

This sequence belongs to the TRAFAC class myosin-kinesin ATPase superfamily. Kinesin family. KIN-14 subfamily.

This Oryza sativa subsp. japonica (Rice) protein is Kinesin-like protein KIN-14M.